The sequence spans 529 residues: Glycerol kinase 5 (529 aa).

S28 and S29 together coordinate ATP. Positions 98, 275, and 276 each coordinate glycerol. Residues T297, G340, and G440 each contribute to the ATP site.

The protein belongs to the FGGY kinase family.

It localises to the cytoplasm. The enzyme catalyses glycerol + ATP = sn-glycerol 3-phosphate + ADP + H(+). It participates in polyol metabolism; glycerol degradation via glycerol kinase pathway; sn-glycerol 3-phosphate from glycerol: step 1/1. Skin-specific kinase that plays a key role in glycerol metabolism, catalyzing its phosphorylation to produce sn-glycerol 3-phosphate. Involved in skin-specific regulation of sterol regulatory element-binding protein (SREBP) processing and lipid biosynthesis. In Homo sapiens (Human), this protein is Glycerol kinase 5.